The chain runs to 419 residues: Argininosuccinate synthase (419 aa).

9-17 (AYSGGLDTS) contacts ATP. Residue Y87 participates in L-citrulline binding. G117 lines the ATP pocket. Positions 119, 123, and 124 each coordinate L-aspartate. N123 serves as a coordination point for L-citrulline. R127, S175, S184, E260, and Y272 together coordinate L-citrulline.

This sequence belongs to the argininosuccinate synthase family. Type 1 subfamily. As to quaternary structure, homotetramer.

It localises to the cytoplasm. It catalyses the reaction L-citrulline + L-aspartate + ATP = 2-(N(omega)-L-arginino)succinate + AMP + diphosphate + H(+). It participates in amino-acid biosynthesis; L-arginine biosynthesis; L-arginine from L-ornithine and carbamoyl phosphate: step 2/3. This is Argininosuccinate synthase from Brevibacillus brevis (strain 47 / JCM 6285 / NBRC 100599).